The following is a 227-amino-acid chain: Cytochrome c oxidase subunit 2 (227 aa).

At 1–14 (MAYPMQLGFQDATS) the chain is on the mitochondrial intermembrane side. A helical transmembrane segment spans residues 15–45 (PIMEELLHFHDHTLMIVFLISSLVLYIISLM). At 46–59 (LTTKLTHTSTMDAQ) the chain is on the mitochondrial matrix side. The helical transmembrane segment at 60-87 (EVETIWTILPAIILILIALPSLRILYMM) threads the bilayer. Residues 88–227 (DEINNPSLTV…YFEKWSASML (140 aa)) are Mitochondrial intermembrane-facing. 6 residues coordinate Cu cation: H161, C196, E198, C200, H204, and M207. E198 lines the Mg(2+) pocket. Residue Y218 is modified to Phosphotyrosine.

It belongs to the cytochrome c oxidase subunit 2 family. As to quaternary structure, component of the cytochrome c oxidase (complex IV, CIV), a multisubunit enzyme composed of 14 subunits. The complex is composed of a catalytic core of 3 subunits MT-CO1, MT-CO2 and MT-CO3, encoded in the mitochondrial DNA, and 11 supernumerary subunits COX4I, COX5A, COX5B, COX6A, COX6B, COX6C, COX7A, COX7B, COX7C, COX8 and NDUFA4, which are encoded in the nuclear genome. The complex exists as a monomer or a dimer and forms supercomplexes (SCs) in the inner mitochondrial membrane with NADH-ubiquinone oxidoreductase (complex I, CI) and ubiquinol-cytochrome c oxidoreductase (cytochrome b-c1 complex, complex III, CIII), resulting in different assemblies (supercomplex SCI(1)III(2)IV(1) and megacomplex MCI(2)III(2)IV(2)). Found in a complex with TMEM177, COA6, COX18, COX20, SCO1 and SCO2. Interacts with TMEM177 in a COX20-dependent manner. Interacts with COX20. Interacts with COX16. Requires Cu cation as cofactor.

The protein localises to the mitochondrion inner membrane. It catalyses the reaction 4 Fe(II)-[cytochrome c] + O2 + 8 H(+)(in) = 4 Fe(III)-[cytochrome c] + 2 H2O + 4 H(+)(out). Its function is as follows. Component of the cytochrome c oxidase, the last enzyme in the mitochondrial electron transport chain which drives oxidative phosphorylation. The respiratory chain contains 3 multisubunit complexes succinate dehydrogenase (complex II, CII), ubiquinol-cytochrome c oxidoreductase (cytochrome b-c1 complex, complex III, CIII) and cytochrome c oxidase (complex IV, CIV), that cooperate to transfer electrons derived from NADH and succinate to molecular oxygen, creating an electrochemical gradient over the inner membrane that drives transmembrane transport and the ATP synthase. Cytochrome c oxidase is the component of the respiratory chain that catalyzes the reduction of oxygen to water. Electrons originating from reduced cytochrome c in the intermembrane space (IMS) are transferred via the dinuclear copper A center (CU(A)) of subunit 2 and heme A of subunit 1 to the active site in subunit 1, a binuclear center (BNC) formed by heme A3 and copper B (CU(B)). The BNC reduces molecular oxygen to 2 water molecules using 4 electrons from cytochrome c in the IMS and 4 protons from the mitochondrial matrix. The polypeptide is Cytochrome c oxidase subunit 2 (MT-CO2) (Syncerus caffer (African buffalo)).